A 632-amino-acid polypeptide reads, in one-letter code: Chaperone protein HtpG (632 aa).

Positions 1–339 are a; substrate-binding; sequence MAHETMSFQA…SADLPLNVSR (339 aa). A b region spans residues 340–559; that stretch reads EILQESRDVK…DNDMSGYLQR (220 aa). Residues 560–632 form a c region; sequence MLKAAGQNAP…TNALLLSRAA (73 aa).

It belongs to the heat shock protein 90 family. As to quaternary structure, homodimer.

The protein localises to the cytoplasm. Its function is as follows. Molecular chaperone. Has ATPase activity. This chain is Chaperone protein HtpG, found in Burkholderia ambifaria (strain ATCC BAA-244 / DSM 16087 / CCUG 44356 / LMG 19182 / AMMD) (Burkholderia cepacia (strain AMMD)).